Reading from the N-terminus, the 211-residue chain is Endonuclease V (211 aa).

D31 and E95 together coordinate Mg(2+). Residues 182-211 form a disordered region; that stretch reads IYEVKNTPSPNRSRKKRGNRGKDNNNSQGN.

Belongs to the endonuclease V family. Requires Mg(2+) as cofactor.

The protein localises to the cytoplasm. The enzyme catalyses Endonucleolytic cleavage at apurinic or apyrimidinic sites to products with a 5'-phosphate.. In terms of biological role, DNA repair enzyme involved in the repair of deaminated bases. Selectively cleaves double-stranded DNA at the second phosphodiester bond 3' to a deoxyinosine leaving behind the intact lesion on the nicked DNA. The polypeptide is Endonuclease V (Pyrococcus horikoshii (strain ATCC 700860 / DSM 12428 / JCM 9974 / NBRC 100139 / OT-3)).